Reading from the N-terminus, the 99-residue chain is Aspartyl/glutamyl-tRNA(Asn/Gln) amidotransferase subunit C (99 aa).

Belongs to the GatC family. Heterotrimer of A, B and C subunits.

The enzyme catalyses L-glutamyl-tRNA(Gln) + L-glutamine + ATP + H2O = L-glutaminyl-tRNA(Gln) + L-glutamate + ADP + phosphate + H(+). It catalyses the reaction L-aspartyl-tRNA(Asn) + L-glutamine + ATP + H2O = L-asparaginyl-tRNA(Asn) + L-glutamate + ADP + phosphate + 2 H(+). Allows the formation of correctly charged Asn-tRNA(Asn) or Gln-tRNA(Gln) through the transamidation of misacylated Asp-tRNA(Asn) or Glu-tRNA(Gln) in organisms which lack either or both of asparaginyl-tRNA or glutaminyl-tRNA synthetases. The reaction takes place in the presence of glutamine and ATP through an activated phospho-Asp-tRNA(Asn) or phospho-Glu-tRNA(Gln). This Corynebacterium glutamicum (strain R) protein is Aspartyl/glutamyl-tRNA(Asn/Gln) amidotransferase subunit C.